The primary structure comprises 344 residues: Protein-arginine kinase (344 aa).

The Phosphagen kinase C-terminal domain maps to 14–244; the sequence is IVLSSRIRLA…KQIIQQERLA (231 aa). Residues 17–21, histidine 81, arginine 115, 166–170, and 197–202 each bind ATP; these read SSRIR, RASAM, and RGLYGE.

The protein belongs to the ATP:guanido phosphotransferase family.

It carries out the reaction L-arginyl-[protein] + ATP = N(omega)-phospho-L-arginyl-[protein] + ADP + H(+). Its function is as follows. Catalyzes the specific phosphorylation of arginine residues in proteins. The sequence is that of Protein-arginine kinase from Clostridium novyi (strain NT).